Reading from the N-terminus, the 472-residue chain is MAGKTLYDKLWDAHLVAEREDGSALIYIDRQIIHEVTSPQAFEGLRLAGRQPWRTSASVATIDHNVPTTPFNSAADITDETSRIQVQTLENNTREFGITEFGIGDVRQGIVHVMAPEQGAVVPGMTVVCGDSHTSTNGALACLAHGIGTSEVEHVLATQTLVAKKMNNMRVSVEGELGPGVTAKDVVLHIIGVIGTAGGTGYALEFAGSAMRSLSMEGRMTVCNMAIEAGARAGMVAVDDVTIDYVKGRPFAPKGADWDKAEAYWRTLVSDADAQFDQQVDIDAADIKPQVSWGTSPEMVVPVDAHLPDPAAETDEVKRSGMTRAYEYMGLTPGMPVTEIKVDRVFIGSCTNSRIEDLRAAAEVAKGRQKAGSVKQVLVVPGSGLVKQQAEKEGLDKIFVEAGFEWREPGCSMCLAMNPDRLEAGEHCASTSNRNFEGRQGNGGRTHLVSPAMAAAAAVAGHFVDIRELDQA.

[4Fe-4S] cluster contacts are provided by Cys-350, Cys-411, and Cys-414.

Belongs to the aconitase/IPM isomerase family. LeuC type 1 subfamily. Heterodimer of LeuC and LeuD. [4Fe-4S] cluster serves as cofactor.

It catalyses the reaction (2R,3S)-3-isopropylmalate = (2S)-2-isopropylmalate. It participates in amino-acid biosynthesis; L-leucine biosynthesis; L-leucine from 3-methyl-2-oxobutanoate: step 2/4. Functionally, catalyzes the isomerization between 2-isopropylmalate and 3-isopropylmalate, via the formation of 2-isopropylmaleate. This Alcanivorax borkumensis (strain ATCC 700651 / DSM 11573 / NCIMB 13689 / SK2) protein is 3-isopropylmalate dehydratase large subunit.